The chain runs to 482 residues: Tripartite motif-containing protein 10 (482 aa).

An RING-type zinc finger spans residues 16–61 (CPICQGTLREPVTIDCGHNFCCVCLTRYLEIPCLDPGELPTCPLCK). The segment at 95 to 136 (EEEDVCLEHREKVYYFCEDDEMQLCVVCREAWEHRHHTVRFL) adopts a B box-type zinc-finger fold. Zn(2+) is bound by residues Cys100, His103, Cys122, and His128. Residues 293 to 482 (REMKTFLEKL…GRGSKFSLSS (190 aa)) enclose the B30.2/SPRY domain.

The protein belongs to the TRIM/RBCC family. As to quaternary structure, interacts with IFNAR1; this interaction prevents association of IFNAR1 with TYK2.

Its subcellular location is the cytoplasm. Its function is as follows. E3 ligase that plays an essential role in the differentiation and survival of terminal erythroid cells. May directly bind to PTEN and promote its ubiquitination, resulting in its proteasomal degradation and activation of hypertrophic signaling. In addition, plays a role in immune response regulation by repressing the phosphorylation of STAT1 and STAT2 in the interferon/JAK/STAT signaling pathway independent of its E3 ligase activity. Mechanistically, interacts with the intracellular domain of IFNAR1 and thereby inhibits the association of TYK2 and IFNAR1. The chain is Tripartite motif-containing protein 10 (TRIM10) from Sus scrofa (Pig).